A 467-amino-acid chain; its full sequence is tRNA modification GTPase MnmE (467 aa).

Residues Arg-25, Glu-87, and Lys-130 each contribute to the (6S)-5-formyl-5,6,7,8-tetrahydrofolate site. The TrmE-type G domain occupies 226-389 (GLSVVLAGQP…LRGELLRIAG (164 aa)). Residue Asn-236 coordinates K(+). GTP is bound by residues 236 to 241 (NVGKSS), 255 to 261 (TPIAGTT), and 280 to 283 (DTAG). Ser-240 contributes to the Mg(2+) binding site. K(+)-binding residues include Thr-255, Ile-257, and Thr-260. Thr-261 contacts Mg(2+). Residue Lys-467 coordinates (6S)-5-formyl-5,6,7,8-tetrahydrofolate.

Belongs to the TRAFAC class TrmE-Era-EngA-EngB-Septin-like GTPase superfamily. TrmE GTPase family. As to quaternary structure, homodimer. Heterotetramer of two MnmE and two MnmG subunits. K(+) serves as cofactor.

It is found in the cytoplasm. Its function is as follows. Exhibits a very high intrinsic GTPase hydrolysis rate. Involved in the addition of a carboxymethylaminomethyl (cmnm) group at the wobble position (U34) of certain tRNAs, forming tRNA-cmnm(5)s(2)U34. In Burkholderia thailandensis (strain ATCC 700388 / DSM 13276 / CCUG 48851 / CIP 106301 / E264), this protein is tRNA modification GTPase MnmE.